The following is a 466-amino-acid chain: Cysteine--tRNA ligase 1 (466 aa).

C27 is a Zn(2+) binding site. A 'HIGH' region motif is present at residues 29-39 (PTVQSPPHIGH). C211, H236, and E240 together coordinate Zn(2+). The short motif at 267–271 (KMSKS) is the 'KMSKS' region element. Position 270 (K270) interacts with ATP.

It belongs to the class-I aminoacyl-tRNA synthetase family. Monomer. Requires Zn(2+) as cofactor.

The protein resides in the cytoplasm. It carries out the reaction tRNA(Cys) + L-cysteine + ATP = L-cysteinyl-tRNA(Cys) + AMP + diphosphate. The chain is Cysteine--tRNA ligase 1 from Tropheryma whipplei (strain TW08/27) (Whipple's bacillus).